Here is a 485-residue protein sequence, read N- to C-terminus: Kynureninase 1 (485 aa).

Residues L155, T156, F183–D186, D267, H270, and Y292 each bind pyridoxal 5'-phosphate. K293 is modified (N6-(pyridoxal phosphate)lysine). Pyridoxal 5'-phosphate contacts are provided by W330 and N358.

This sequence belongs to the kynureninase family. Homodimer. Requires pyridoxal 5'-phosphate as cofactor.

The protein localises to the cytoplasm. The enzyme catalyses L-kynurenine + H2O = anthranilate + L-alanine + H(+). It catalyses the reaction 3-hydroxy-L-kynurenine + H2O = 3-hydroxyanthranilate + L-alanine + H(+). Its pathway is amino-acid degradation; L-kynurenine degradation; L-alanine and anthranilate from L-kynurenine: step 1/1. It participates in cofactor biosynthesis; NAD(+) biosynthesis; quinolinate from L-kynurenine: step 2/3. Functionally, catalyzes the cleavage of L-kynurenine (L-Kyn) and L-3-hydroxykynurenine (L-3OHKyn) into anthranilic acid (AA) and 3-hydroxyanthranilic acid (3-OHAA), respectively. This chain is Kynureninase 1 (kyn-1), found in Neurospora crassa (strain ATCC 24698 / 74-OR23-1A / CBS 708.71 / DSM 1257 / FGSC 987).